Here is a 478-residue protein sequence, read N- to C-terminus: Monocarboxylate transporter 2 (478 aa).

The Cytoplasmic portion of the chain corresponds to methionine 1–aspartate 15. Residues glycine 16–phenylalanine 36 traverse the membrane as a helical segment. Residues proline 37–alanine 59 lie on the Extracellular side of the membrane. A helical membrane pass occupies residues tryptophan 60–valine 80. The Cytoplasmic portion of the chain corresponds to asparagine 81 to valine 89. A helical transmembrane segment spans residues isoleucine 90–valine 110. The Extracellular portion of the chain corresponds to glutamine 111–threonine 115. A helical transmembrane segment spans residues methionine 116–glycine 136. Residues lysine 137–glycine 148 are Cytoplasmic-facing. The chain crosses the membrane as a helical span at residues leucine 149–phenylalanine 169. Residues asparagine 170–glycine 173 lie on the Extracellular side of the membrane. A helical transmembrane segment spans residues tryptophan 174 to leucine 194. Residues methionine 195–glycine 246 lie on the Cytoplasmic side of the membrane. Residues proline 200–lysine 224 form a disordered region. Residues phenylalanine 247–phenylalanine 267 traverse the membrane as a helical segment. The Extracellular portion of the chain corresponds to leucine 268 to alanine 282. The chain crosses the membrane as a helical span at residues alanine 283 to isoleucine 303. Residues alanine 304 to arginine 312 lie on the Cytoplasmic side of the membrane. A helical transmembrane segment spans residues isoleucine 313 to leucine 333. Residues alanine 334–threonine 338 lie on the Extracellular side of the membrane. The helical transmembrane segment at serine 339–phenylalanine 359 threads the bilayer. Residues glutamate 360–serine 373 lie on the Cytoplasmic side of the membrane. The helical transmembrane segment at alanine 374–glycine 394 threads the bilayer. At lysine 395–methionine 406 the chain is on the extracellular side. The chain crosses the membrane as a helical span at residues tyrosine 407–isoleucine 427. The Cytoplasmic segment spans residues asparagine 428–isoleucine 478. A compositionally biased stretch (basic and acidic residues) spans lysine 437–asparagine 461. A disordered region spans residues lysine 437 to isoleucine 478.

It belongs to the major facilitator superfamily. Monocarboxylate porter (TC 2.A.1.13) family. In terms of assembly, homodimer. Interacts with GRID2IP. Interacts with EMB; interaction mediates SLC16A7 targeting to the plasma membrane. Interacts with isoform 2 of BSG. In terms of tissue distribution, detected in heart and in blood lymphocytes and monocytes (at protein level). High expression in testis, moderate to low in spleen, heart, kidney, pancreas, skeletal muscle, brain and leukocyte. Restricted expression in normal tissues, but widely expressed in cancer cells.

It localises to the cell membrane. The protein localises to the basolateral cell membrane. Its subcellular location is the cytoplasm. It carries out the reaction pyruvate(out) + H(+)(out) = pyruvate(in) + H(+)(in). The catalysed reaction is 3-methyl-2-oxobutanoate(out) + H(+)(out) = 3-methyl-2-oxobutanoate(in) + H(+)(in). The enzyme catalyses (S)-lactate(in) + H(+)(in) = (S)-lactate(out) + H(+)(out). It catalyses the reaction acetoacetate(out) + H(+)(out) = acetoacetate(in) + H(+)(in). It carries out the reaction (R)-3-hydroxybutanoate(out) + H(+)(out) = (R)-3-hydroxybutanoate(in) + H(+)(in). The catalysed reaction is 4-methyl-2-oxopentanoate(out) + H(+)(out) = 4-methyl-2-oxopentanoate(in) + H(+)(in). The enzyme catalyses (S)-3-hydroxybutanoate(out) + H(+)(out) = (S)-3-hydroxybutanoate(in) + H(+)(in). Transport activity exhibits steep dependence on substrate concentration. Substrate concentration sensitivity of SLC16A7 arises from the strong inter-subunit cooperativity of the SLC16A7 dimer during transport. Inhibited by AR-C155858. In terms of biological role, proton-coupled monocarboxylate symporter. Catalyzes the rapid transport across the plasma membrane of monocarboxylates such as L-lactate, pyruvate and ketone bodies, acetoacetate, beta-hydroxybutyrate and acetate. Dimerization is functionally required and both subunits work cooperatively in transporting substrate. The protein is Monocarboxylate transporter 2 of Homo sapiens (Human).